Reading from the N-terminus, the 263-residue chain is MAVGKNKGLSKGGKKGVKKKIVDPFTRKDWYDVKAPSMFSKRQVGTTLVNRTQGTKIASEGLKGRVFEVSLADLQADTDAERSFRKFRLIAEYVQGRNVLCNFHGMDLTTDKLRWMVKKWQTLIEANIDVKTTDGYVLRVFCIGFTNKDSLSQRKTCYAQHTQVRAIRKKMCEIITRDVTNSELREVVNKLIPDSIAKDIEKACHGIYPLRDVCIRKVKVLKRPRFEISKLMELHGEGGGGKGEAGDKSERPEGYEPPVQESV.

The tract at residues 235–263 (HGEGGGGKGEAGDKSERPEGYEPPVQESV) is disordered. Basic and acidic residues predominate over residues 244–254 (EAGDKSERPEG).

Belongs to the eukaryotic ribosomal protein eS1 family. Component of the small ribosomal subunit. Mature ribosomes consist of a small (40S) and a large (60S) subunit. The 40S subunit contains about 33 different proteins and 1 molecule of RNA (18S). The 60S subunit contains about 49 different proteins and 3 molecules of RNA (28S, 5.8S and 5S).

It localises to the cytoplasm. The chain is Small ribosomal subunit protein eS1 from Bombyx mori (Silk moth).